The sequence spans 391 residues: Dual-specificity RNA methyltransferase RlmN (391 aa).

Positions 1–20 (MTSVVADSLTETKTDSQKPI) are disordered. The span at 10-20 (TETKTDSQKPI) shows a compositional bias: basic and acidic residues. Glu-120 functions as the Proton acceptor in the catalytic mechanism. One can recognise a Radical SAM core domain in the interval 126 to 366 (DADRGTLCIS…APVRRTRGQD (241 aa)). The cysteines at positions 133 and 371 are disulfide-linked. Residues Cys-140, Cys-144, and Cys-147 each coordinate [4Fe-4S] cluster. S-adenosyl-L-methionine is bound by residues 195–196 (GE), Ser-227, 249–251 (SLH), and Asn-328. Cys-371 acts as the S-methylcysteine intermediate in catalysis.

Belongs to the radical SAM superfamily. RlmN family. The cofactor is [4Fe-4S] cluster.

It is found in the cytoplasm. The catalysed reaction is adenosine(2503) in 23S rRNA + 2 reduced [2Fe-2S]-[ferredoxin] + 2 S-adenosyl-L-methionine = 2-methyladenosine(2503) in 23S rRNA + 5'-deoxyadenosine + L-methionine + 2 oxidized [2Fe-2S]-[ferredoxin] + S-adenosyl-L-homocysteine. The enzyme catalyses adenosine(37) in tRNA + 2 reduced [2Fe-2S]-[ferredoxin] + 2 S-adenosyl-L-methionine = 2-methyladenosine(37) in tRNA + 5'-deoxyadenosine + L-methionine + 2 oxidized [2Fe-2S]-[ferredoxin] + S-adenosyl-L-homocysteine. In terms of biological role, specifically methylates position 2 of adenine 2503 in 23S rRNA and position 2 of adenine 37 in tRNAs. m2A2503 modification seems to play a crucial role in the proofreading step occurring at the peptidyl transferase center and thus would serve to optimize ribosomal fidelity. The sequence is that of Dual-specificity RNA methyltransferase RlmN from Zymomonas mobilis subsp. mobilis (strain ATCC 31821 / ZM4 / CP4).